The chain runs to 156 residues: Persephin (156 aa).

Positions 1 to 21 (MAVGKFLLGSLLLLSLQLGQG) are cleaved as a signal peptide. 3 disulfides stabilise this stretch: cysteine 66/cysteine 124, cysteine 93/cysteine 152, and cysteine 97/cysteine 154.

Belongs to the TGF-beta family. GDNF subfamily. As to quaternary structure, homodimer; disulfide-linked. Interacts with GFRA4 coreceptor and RET: forms a 2:2:2 ternary complex composed of PSPN ligand, GFRA4 and RET receptor.

The protein localises to the secreted. Functionally, growth factor that exhibits neurotrophic activity on mesencephalic dopaminergic and motor neurons. Acts by binding to its coreceptor, GFRA4, leading to autophosphorylation and activation of the RET receptor. In Homo sapiens (Human), this protein is Persephin.